We begin with the raw amino-acid sequence, 124 residues long: Large ribosomal subunit protein bL12 (124 aa).

It belongs to the bacterial ribosomal protein bL12 family. In terms of assembly, homodimer. Part of the ribosomal stalk of the 50S ribosomal subunit. Forms a multimeric L10(L12)X complex, where L10 forms an elongated spine to which 2 to 4 L12 dimers bind in a sequential fashion. Binds GTP-bound translation factors.

In terms of biological role, forms part of the ribosomal stalk which helps the ribosome interact with GTP-bound translation factors. Is thus essential for accurate translation. In Cereibacter sphaeroides (strain ATCC 17025 / ATH 2.4.3) (Rhodobacter sphaeroides), this protein is Large ribosomal subunit protein bL12.